Here is a 239-residue protein sequence, read N- to C-terminus: Small ribosomal subunit protein uS2c (239 aa).

Belongs to the universal ribosomal protein uS2 family.

It localises to the plastid. This is Small ribosomal subunit protein uS2c (rps2) from Aneura mirabilis (Parasitic liverwort).